The primary structure comprises 215 residues: Probable transaldolase 1 (215 aa).

The Schiff-base intermediate with substrate role is filled by Lys-83.

It belongs to the transaldolase family. Type 3B subfamily.

It is found in the cytoplasm. The enzyme catalyses D-sedoheptulose 7-phosphate + D-glyceraldehyde 3-phosphate = D-erythrose 4-phosphate + beta-D-fructose 6-phosphate. The protein operates within carbohydrate degradation; pentose phosphate pathway; D-glyceraldehyde 3-phosphate and beta-D-fructose 6-phosphate from D-ribose 5-phosphate and D-xylulose 5-phosphate (non-oxidative stage): step 2/3. In terms of biological role, transaldolase is important for the balance of metabolites in the pentose-phosphate pathway. The sequence is that of Probable transaldolase 1 from Bacillus cereus (strain ATCC 14579 / DSM 31 / CCUG 7414 / JCM 2152 / NBRC 15305 / NCIMB 9373 / NCTC 2599 / NRRL B-3711).